We begin with the raw amino-acid sequence, 80 residues long: Small ribosomal subunit protein bS16 (80 aa).

The protein belongs to the bacterial ribosomal protein bS16 family.

This Blochmanniella pennsylvanica (strain BPEN) protein is Small ribosomal subunit protein bS16.